The sequence spans 247 residues: Ribonuclease 3 (247 aa).

Positions 21-149 constitute an RNase III domain; the sequence is FKKLSKKIGI…LVGAIYLDRG (129 aa). A Mg(2+)-binding site is contributed by Glu62. Asp66 is a catalytic residue. Positions 135 and 138 each coordinate Mg(2+). Residue Glu138 is part of the active site. The region spanning 176-245 is the DRBM domain; sequence DYKTQLQEYS…AKELYIRIRR (70 aa).

It belongs to the ribonuclease III family. In terms of assembly, homodimer. The cofactor is Mg(2+).

The protein localises to the cytoplasm. The enzyme catalyses Endonucleolytic cleavage to 5'-phosphomonoester.. Digests double-stranded RNA. Involved in the processing of primary rRNA transcript to yield the immediate precursors to the large and small rRNAs (23S and 16S). Processes some mRNAs, and tRNAs when they are encoded in the rRNA operon. Processes pre-crRNA and tracrRNA of type II CRISPR loci if present in the organism. The sequence is that of Ribonuclease 3 from Leptospira borgpetersenii serovar Hardjo-bovis (strain L550).